The following is an 89-amino-acid chain: DNA/RNA-binding protein Alba 2 (89 aa).

Lysine 12 bears the N6-acetyllysine mark.

It belongs to the histone-like Alba family. Post-translationally, acetylated. Acetylation at Lys-12 decreases DNA-binding affinity.

It localises to the cytoplasm. Its subcellular location is the chromosome. Its function is as follows. Binds double-stranded DNA tightly but without sequence specificity. Involved in DNA compaction. This chain is DNA/RNA-binding protein Alba 2, found in Saccharolobus shibatae (strain ATCC 51178 / DSM 5389 / JCM 8931 / NBRC 15437 / B12) (Sulfolobus shibatae).